Consider the following 205-residue polypeptide: Cytochrome c oxidase subunit 3 (205 aa).

The next 5 helical transmembrane spans lie at 29–49 (TIVF…MYFV), 72–92 (ALLI…GVFA), 104–124 (WFLV…YEYI), 142–162 (FFIT…AFVV), and 184–204 (SYYW…IYFI).

As to quaternary structure, associates with subunits I, II and IV to form cytochrome c oxidase. The 4 subunit cytochrome c oxidase forms a supercomplex with the menaquinol-cytochrome c reductase complex (cytochrome bc1).

The protein resides in the cell membrane. The enzyme catalyses 4 Fe(II)-[cytochrome c] + O2 + 8 H(+)(in) = 4 Fe(III)-[cytochrome c] + 2 H2O + 4 H(+)(out). The sequence is that of Cytochrome c oxidase subunit 3 (ctaE) from Corynebacterium glutamicum (strain ATCC 13032 / DSM 20300 / JCM 1318 / BCRC 11384 / CCUG 27702 / LMG 3730 / NBRC 12168 / NCIMB 10025 / NRRL B-2784 / 534).